Reading from the N-terminus, the 80-residue chain is Putative membrane protein insertion efficiency factor (80 aa).

Residues 61-80 (KTGKDPVPDHFSLKRNQEGE) are disordered. A compositionally biased stretch (basic and acidic residues) spans 62-80 (TGKDPVPDHFSLKRNQEGE).

Belongs to the UPF0161 family.

The protein resides in the cell membrane. Functionally, could be involved in insertion of integral membrane proteins into the membrane. The polypeptide is Putative membrane protein insertion efficiency factor (Streptococcus pneumoniae (strain 70585)).